A 458-amino-acid polypeptide reads, in one-letter code: Chromosomal replication initiator protein DnaA (458 aa).

Residues 1-84 (MENIWLEAQT…FHVAEEKPEA (84 aa)) form a domain I, interacts with DnaA modulators region. Over residues 80-119 (EKPEAAHEAKPEKEAKPAREKERDKDKEKEKDREKEKKEL) the composition is skewed to basic and acidic residues. Residues 80–120 (EKPEAAHEAKPEKEAKPAREKERDKDKEKEKDREKEKKELV) form a disordered region. Residues 84-121 (AAHEAKPEKEAKPAREKERDKDKEKEKDREKEKKELVP) form a domain II region. The interval 122–338 (NLNPKYTFES…GMLIRLEAFA (217 aa)) is domain III, AAA+ region. Glycine 166, glycine 168, lysine 169, and threonine 170 together coordinate ATP. The interval 339 to 458 (SLTGQEITLS…VEDIRKKLFT (120 aa)) is domain IV, binds dsDNA.

Belongs to the DnaA family. In terms of assembly, oligomerizes as a right-handed, spiral filament on DNA at oriC.

It localises to the cytoplasm. Functionally, plays an essential role in the initiation and regulation of chromosomal replication. ATP-DnaA binds to the origin of replication (oriC) to initiate formation of the DNA replication initiation complex once per cell cycle. Binds the DnaA box (a 9 base pair repeat at the origin) and separates the double-stranded (ds)DNA. Forms a right-handed helical filament on oriC DNA; dsDNA binds to the exterior of the filament while single-stranded (ss)DNA is stabiized in the filament's interior. The ATP-DnaA-oriC complex binds and stabilizes one strand of the AT-rich DNA unwinding element (DUE), permitting loading of DNA polymerase. After initiation quickly degrades to an ADP-DnaA complex that is not apt for DNA replication. Binds acidic phospholipids. This chain is Chromosomal replication initiator protein DnaA, found in Citrifermentans bemidjiense (strain ATCC BAA-1014 / DSM 16622 / JCM 12645 / Bem) (Geobacter bemidjiensis).